A 1052-amino-acid chain; its full sequence is Swarming motility protein SwrC (1052 aa).

Belongs to the resistance-nodulation-cell division (RND) (TC 2.A.6) family.

Its function is as follows. Required for self-resistance to surfactin, an antimicrobial lipopeptide surfactant produced by B.subtilis. Also required for swarming motility. The polypeptide is Swarming motility protein SwrC (swrC) (Bacillus subtilis (strain 168)).